The sequence spans 1843 residues: Proteasome activator complex subunit 4 (1843 aa).

Over residues 1-11 the composition is skewed to low complexity; sequence MEPAERAGVGE. The interval 1–25 is disordered; sequence MEPAERAGVGEPPEPGGRPEPGPRG. Over residues 12–22 the composition is skewed to pro residues; sequence PPEPGGRPEPG. HEAT repeat units follow at residues 475–519 and 998–1037; these read PEGP…LVDC and NFCC…NHSG. Ser1121 carries the post-translational modification Phosphoserine. 2 HEAT repeats span residues 1179–1217 and 1354–1392; these read RVLP…QLKR and DAFL…GSKH. At Ser1614 the chain carries Phosphoserine. HEAT repeat units lie at residues 1636–1674 and 1680–1718; these read PHQV…YNLF and EDAV…CNFL. Residues 1650-1738 form a bromodomain-like (BRDL) region; it reads ARSSSWHARY…EQLCKTKLPK (89 aa). Ser1746 carries the post-translational modification Phosphoserine.

The protein belongs to the BLM10 family. Homodimer. Interacts with the 20S and 26S proteasomes. Component of the spermatoproteasome, a form of the proteasome specifically found in testis.

The protein localises to the cytoplasm. Its subcellular location is the cytosol. The protein resides in the nucleus. It is found in the nucleus speckle. Functionally, associated component of the proteasome that specifically recognizes acetylated histones and promotes ATP- and ubiquitin-independent degradation of core histones during spermatogenesis and DNA damage response. Recognizes and binds acetylated histones via its bromodomain-like (BRDL) region and activates the proteasome by opening the gated channel for substrate entry. Binds to the core proteasome via its C-terminus, which occupies the same binding sites as the proteasomal ATPases, opening the closed structure of the proteasome via an active gating mechanism. Component of the spermatoproteasome, a form of the proteasome specifically found in testis: binds to acetylated histones and promotes degradation of histones, thereby participating actively to the exchange of histones during spermatogenesis. Also involved in DNA damage response in somatic cells, by promoting degradation of histones following DNA double-strand breaks. This is Proteasome activator complex subunit 4 from Homo sapiens (Human).